The following is a 313-amino-acid chain: tRNA-cytidine(32) 2-sulfurtransferase (313 aa).

Positions 50-55 match the PP-loop motif motif; that stretch reads SGGKDS. Cys-125, Cys-128, and Cys-216 together coordinate [4Fe-4S] cluster.

This sequence belongs to the TtcA family. Homodimer. The cofactor is Mg(2+). Requires [4Fe-4S] cluster as cofactor.

It is found in the cytoplasm. It catalyses the reaction cytidine(32) in tRNA + S-sulfanyl-L-cysteinyl-[cysteine desulfurase] + AH2 + ATP = 2-thiocytidine(32) in tRNA + L-cysteinyl-[cysteine desulfurase] + A + AMP + diphosphate + H(+). The protein operates within tRNA modification. Its function is as follows. Catalyzes the ATP-dependent 2-thiolation of cytidine in position 32 of tRNA, to form 2-thiocytidine (s(2)C32). The sulfur atoms are provided by the cysteine/cysteine desulfurase (IscS) system. The chain is tRNA-cytidine(32) 2-sulfurtransferase from Haemophilus influenzae (strain ATCC 51907 / DSM 11121 / KW20 / Rd).